A 721-amino-acid chain; its full sequence is Polyribonucleotide nucleotidyltransferase (721 aa).

The Mg(2+) site is built by Asp-495 and Asp-501. The KH domain occupies 562-621 (PRLLSFRIDPELIGTVIGPGGRTIKGITERTNTKIDIEDSGIVTIASHDGAAADEAQKII). Residues 631 to 699 (GEVFSGAITR…NRGRINLTLR (69 aa)) enclose the S1 motif domain. Positions 700-721 (GVPQNGEEAEPAPAPTPVAPLN) are disordered. Over residues 711 to 721 (APAPTPVAPLN) the composition is skewed to pro residues.

It belongs to the polyribonucleotide nucleotidyltransferase family. Requires Mg(2+) as cofactor.

It is found in the cytoplasm. It carries out the reaction RNA(n+1) + phosphate = RNA(n) + a ribonucleoside 5'-diphosphate. Functionally, involved in mRNA degradation. Catalyzes the phosphorolysis of single-stranded polyribonucleotides processively in the 3'- to 5'-direction. The polypeptide is Polyribonucleotide nucleotidyltransferase (Synechococcus sp. (strain WH7803)).